The chain runs to 361 residues: DNA-(apurinic or apyrimidinic site) endonuclease (361 aa).

The interval 1–90 (MTSRTKKLKM…TNKTTASVSI (90 aa)) is disordered. Positions 25 to 39 (TSEEEKEEVEEEEEE) are enriched in acidic residues. Positions 41 to 44 (KKRK) match the Nuclear localization signal motif. Over residues 43-64 (RKLVKKTPAKKAPAKKAAAKKK) the composition is skewed to basic residues. Residues 68 to 80 (EDEDEEEKEEEEE) are compositionally biased toward acidic residues. Residue E139 coordinates Mg(2+). Y211 is a catalytic residue. D252, N254, and D350 together coordinate Mg(2+). The active-site Proton donor/acceptor is the D252.

This sequence belongs to the DNA repair enzymes AP/ExoA family. Mg(2+) is required as a cofactor. It depends on Mn(2+) as a cofactor.

The protein resides in the nucleus. The polypeptide is DNA-(apurinic or apyrimidinic site) endonuclease (apeA) (Dictyostelium discoideum (Social amoeba)).